The primary structure comprises 1073 residues: MRVFLLCAYILLLMVSQLRAVSFPEDDEPLNTVDYHYSRQYPVFRGRPSGNESQHRLDFQLMLKIRDTLYIAGRDQVYTVNLNEMPKTEVIPNKKLTWRSRQQDRENCAMKGKHKDECHNFIKVFVPRNDEMVFVCGTNAFNPMCRYYRLSTLEYDGEEISGLARCPFDARQTNVALFADGKLYSATVADFLASDAVIYRSMGDGSALRTIKYDSKWIKEPHFLHAIEYGNYVYFFFREIAVEHNNLGKAVYSRVARICKNDMGGSQRVLEKHWTSFLKARLNCSVPGDSFFYFDVLQSITDIIQINGIPTVVGVFTTQLNSIPGSAVCAFSMDDIEKVFKGRFKEQKTPDSVWTAVPEDKVPKPRPGCCAKHGLAEAYKTSIDFPDETLSFIKSHPLMDSAVPPIADEPWFTKTRVRYRLTAISVDHSAGPYQNYTVIFVGSEAGMVLKVLAKTSPFSLNDSVLLEEIEAYNHAKCSAENEEDKKVISLQLDKDHHALYVAFSSCIIRIPLSRCERYGSCKKSCIASRDPYCGWLSQGSCGRVTPGMLAEGYEQDTEFGNTAHLGDCHEILPTSTTPDYKIFGGPTSDMEVSSSSVTTMASIPEITPKVIDTWRPKLTSSRKFVVQDDPNTSDFTDPLSGIPKGVRWEVQSGESNQMVHMNVLITCVFAAFVLGAFIAGVAVYCYRDMFVRKNRKIHKDAESAQSCTDSSGSFAKLNGLFDSPVKEYQQNIDSPKLYSNLLTSRKELPPNGDTKSMVMDHRGQPPELAALPTPESTPVLHQKTLQAMKSHSEKAHGHGASRKETPQFFPSSPPPHSPLSHGHIPSAIVLPNATHDYNTSFSNSNAHKAEKKLQNIDHPLTKSSSKRDHRRSVDSRNTLNDLLKHLNDPNSNPKAIMGDIQMAHQNLMLDPMGSMSEVPPKVPNREASLYSPPSTLPRNSPTKRVDVPTTPGVPMTSLERQRGYHKNSSQRHSISAMPKNLNSPNGVLLSRQPSMNRGGYMPTPTGAKVDYIQGTPVSVHLQPSLSRQSSYTSNGTLPRTGLKRTPSLKPDVPPKPSFVPQTPSVRPLNKYTY.

The signal sequence occupies residues 1–20 (MRVFLLCAYILLLMVSQLRA). The Extracellular segment spans residues 21-662 (VSFPEDDEPL…GESNQMVHMN (642 aa)). In terms of domain architecture, Sema spans 27–512 (DEPLNTVDYH…FSSCIIRIPL (486 aa)). A glycan (N-linked (GlcNAc...) asparagine) is linked at Asn51. Disulfide bonds link Cys108–Cys118, Cys136–Cys145, Cys259–Cys370, and Cys284–Cys329. Asn283 is a glycosylation site (N-linked (GlcNAc...) asparagine). N-linked (GlcNAc...) asparagine glycosylation is found at Asn435 and Asn461. 4 cysteine pairs are disulfide-bonded: Cys477–Cys506, Cys515–Cys533, Cys521–Cys568, and Cys525–Cys541. In terms of domain architecture, PSI spans 514–569 (RCERYGSCKKSCIASRDPYCGWLSQGSCGRVTPGMLAEGYEQDTEFGNTAHLGDCH). N-linked (GlcNAc...) asparagine glycosylation is present at Asn631. The helical transmembrane segment at 663 to 683 (VLITCVFAAFVLGAFIAGVAV) threads the bilayer. Over 684–1073 (YCYRDMFVRK…SVRPLNKYTY (390 aa)) the chain is Cytoplasmic. Phosphoserine is present on residues Ser723, Ser734, and Ser744. Disordered regions lie at residues 744-775 (SRKELPPNGDTKSMVMDHRGQPPELAALPTPE), 787-825 (AMKSHSEKAHGHGASRKETPQFFPSSPPPHSPLSHGHIP), 839-874 (TSFSNSNAHKAEKKLQNIDHPLTKSSSKRDHRRSVD), 914-1005 (SMSE…PTPT), and 1021-1073 (LQPS…KYTY). Thr773 carries the post-translational modification Phosphothreonine. Residues 790–805 (SHSEKAHGHGASRKET) show a composition bias toward basic and acidic residues. Phosphoserine is present on residues Ser931, Ser957, and Ser983. Residues 931–942 (SPPSTLPRNSPT) are compositionally biased toward polar residues. 2 stretches are compositionally biased toward polar residues: residues 980–995 (NLNSPNGVLLSRQPSM) and 1021–1037 (LQPSLSRQSSYTSNGTL).

The protein belongs to the semaphorin family.

Its subcellular location is the cell membrane. It localises to the cytoplasm. Functionally, shows growth cone collapsing activity on dorsal root ganglion (DRG) neurons in vitro. May be a stop signal for the DRG neurons in their target areas, and possibly also for other neurons. May also be involved in the maintenance and remodeling of neuronal connections. Ligand of TREM2 with PLXNA1 as coreceptor in dendritic cells, plays a role in the generation of immune responses and skeletal homeostasis. The sequence is that of Semaphorin-6D from Homo sapiens (Human).